A 433-amino-acid chain; its full sequence is Adenylosuccinate synthetase (433 aa).

GTP-binding positions include 11 to 17 (GDEGKGK) and 39 to 41 (GHT). The Proton acceptor role is filled by Asp-12. Mg(2+)-binding residues include Asp-12 and Gly-39. Residues 12-15 (DEGK), 37-40 (NAGH), Thr-134, Arg-148, Asn-230, Thr-245, and Arg-309 contribute to the IMP site. His-40 functions as the Proton donor in the catalytic mechanism. 305–311 (VTTGRKR) is a binding site for substrate. GTP-binding positions include Arg-311, 337–339 (KLD), and 419–421 (GTG).

This sequence belongs to the adenylosuccinate synthetase family. As to quaternary structure, homodimer. Mg(2+) is required as a cofactor.

It is found in the cytoplasm. It carries out the reaction IMP + L-aspartate + GTP = N(6)-(1,2-dicarboxyethyl)-AMP + GDP + phosphate + 2 H(+). It functions in the pathway purine metabolism; AMP biosynthesis via de novo pathway; AMP from IMP: step 1/2. Its function is as follows. Plays an important role in the de novo pathway and in the salvage pathway of purine nucleotide biosynthesis. Catalyzes the first committed step in the biosynthesis of AMP from IMP. This is Adenylosuccinate synthetase from Saccharomyces cerevisiae (strain JAY291) (Baker's yeast).